Here is a 285-residue protein sequence, read N- to C-terminus: RNA 5'-monophosphate methyltransferase (285 aa).

Residues R46, N77, D111, 136-137, and M165 each bind S-adenosyl-L-methionine; that span reads DI. Residues 53-275 enclose the Bin3-type SAM domain; that stretch reads ELLRQLFPPE…KHTHETQAIP (223 aa).

This sequence belongs to the methyltransferase superfamily. As to quaternary structure, interacts with DICER1; the interaction may be mediated by RNA.

Its subcellular location is the cytoplasm. It catalyses the reaction a 5'-end 5'-phospho-ribonucleoside-RNA + S-adenosyl-L-methionine = a 5'-end (5'-methylphospho)-ribonucleoside-RNA + S-adenosyl-L-homocysteine. It carries out the reaction a 5'-end 5'-phospho-ribonucleoside-RNA + 2 S-adenosyl-L-methionine = a 5'-end (5'-bismethylphospho)-ribonucleoside-RNA + 2 S-adenosyl-L-homocysteine. Its function is as follows. O-methyltransferase that specifically monomethylates 5'-monophosphate of cytoplasmic histidyl tRNA (tRNA(His)), acting as a capping enzyme by protecting tRNA(His) from cleavage by DICER1. Also able, with less efficiently, to methylate the 5' monophosphate of a subset of pre-miRNAs, acting as a negative regulator of miRNA processing. The 5' monophosphate of pre-miRNAs is recognized by DICER1 and is required for pre-miRNAs processing: methylation at this position reduces the processing of pre-miRNAs by DICER1. Was also reported to mediate dimethylation of pre-miR-145; however dimethylation cannot be reproduced by another group which observes a monomethylation of pre-miR-145. The polypeptide is RNA 5'-monophosphate methyltransferase (Mus musculus (Mouse)).